The sequence spans 458 residues: Transmembrane protein adipocyte-associated 1 homolog (458 aa).

2 N-linked (GlcNAc...) asparagine glycosylation sites follow: asparagine 21 and asparagine 45. The next 7 membrane-spanning stretches (helical) occupy residues 81–101 (VILV…GSVI), 114–134 (AFTL…AYSM), 152–172 (IIIK…GLLF), 181–201 (ILIA…VQVI), 225–245 (FLFW…IMCL), 263–283 (LIYC…AALI), and 291–311 (LCFV…IIYF). N-linked (GlcNAc...) asparagine glycosylation is found at asparagine 323 and asparagine 324. The interval 409 to 458 (RTGSDDYAHHRDSMLSEPSTGTTTRHLKGLGPQGSLVFEDDPSSLTSLRM) is disordered. Residues 411–422 (GSDDYAHHRDSM) are compositionally biased toward basic and acidic residues.

Belongs to the UPF0359 family.

The protein resides in the membrane. The polypeptide is Transmembrane protein adipocyte-associated 1 homolog (tpra-1) (Caenorhabditis elegans).